A 402-amino-acid chain; its full sequence is Tyrosine--tRNA ligase (402 aa).

Residues 48–57 (PTGSDIHLGH) carry the 'HIGH' region motif. Positions 235-239 (KMSKS) match the 'KMSKS' region motif. An ATP-binding site is contributed by Lys238. Residues 338–402 (AKAFYLVSAV…GKKKFVRLVL (65 aa)) form the S4 RNA-binding domain.

It belongs to the class-I aminoacyl-tRNA synthetase family. TyrS type 2 subfamily. In terms of assembly, homodimer.

The protein localises to the cytoplasm. It carries out the reaction tRNA(Tyr) + L-tyrosine + ATP = L-tyrosyl-tRNA(Tyr) + AMP + diphosphate + H(+). Functionally, catalyzes the attachment of tyrosine to tRNA(Tyr) in a two-step reaction: tyrosine is first activated by ATP to form Tyr-AMP and then transferred to the acceptor end of tRNA(Tyr). The polypeptide is Tyrosine--tRNA ligase (Synechococcus elongatus (strain ATCC 33912 / PCC 7942 / FACHB-805) (Anacystis nidulans R2)).